Here is a 264-residue protein sequence, read N- to C-terminus: Zinc import ATP-binding protein ZnuC (264 aa).

Residues 20 to 235 form the ABC transporter domain; sequence VQLKNIEVTF…PNFIHFFGDQ (216 aa). ATP is bound at residue 52–59; the sequence is GPNGGGKS.

Belongs to the ABC transporter superfamily. Zinc importer (TC 3.A.1.15.5) family. In terms of assembly, the complex is composed of two ATP-binding proteins (ZnuC), two transmembrane proteins (ZnuB) and a solute-binding protein (ZnuA).

The protein resides in the cell inner membrane. It carries out the reaction Zn(2+)(out) + ATP(in) + H2O(in) = Zn(2+)(in) + ADP(in) + phosphate(in) + H(+)(in). Part of the ABC transporter complex ZnuABC involved in zinc import. Responsible for energy coupling to the transport system. The protein is Zinc import ATP-binding protein ZnuC of Haemophilus ducreyi (strain 35000HP / ATCC 700724).